Reading from the N-terminus, the 312-residue chain is Olfactory receptor 8G50 (312 aa).

Topologically, residues 1–28 (MAYSNQSRVTEFIISGLTNKPELQLPLF) are extracellular. Residue Asn-5 is glycosylated (N-linked (GlcNAc...) asparagine). The helical transmembrane segment at 29–49 (LLFLGIYLFTVLGNLGMIILI) threads the bilayer. Residues 50–56 (LLSSHLH) lie on the Cytoplasmic side of the membrane. A helical transmembrane segment spans residues 57–77 (TPMYFFLSSLSFIDLCYSTII). Residues 78-99 (TPKMLVNFVTTKNVISYQECMT) lie on the Extracellular side of the membrane. Cys-97 and Cys-189 form a disulfide bridge. The helical transmembrane segment at 100 to 120 (QLYFFIAFVISECHMLAAMAY) threads the bilayer. The Cytoplasmic portion of the chain corresponds to 121-143 (DRYVAICNPLLYNVTMSYQVCSW). A helical membrane pass occupies residues 144–164 (MVGGVYGMGFIGAAIHTFCML). Residues 165–204 (RVVFCKDNIINHYFCDLFPLMELACSSTYVNEVVLLSLSA) are Extracellular-facing. Residues 205-225 (FNIFIPTLTILGSYIFIIISI) form a helical membrane-spanning segment. Topologically, residues 226-244 (LRIKSTEGRFKAFSTCSSH) are cytoplasmic. The helical transmembrane segment at 245-265 (FSAVSVFFGSLAFMYLQPFSV) threads the bilayer. The Extracellular portion of the chain corresponds to 266–274 (SSKDKGKVS). A helical membrane pass occupies residues 275–292 (SVFYTTIVPMLNPMIYSL). Residues 293-312 (RNRDVKLALNKLFQKKKFHV) lie on the Cytoplasmic side of the membrane.

It belongs to the G-protein coupled receptor 1 family.

It localises to the cell membrane. Functionally, odorant receptor. This is Olfactory receptor 8G50 from Mus musculus (Mouse).